The following is a 501-amino-acid chain: Probable cytosol aminopeptidase (501 aa).

Positions 268 and 273 each coordinate Mn(2+). The active site involves Lys280. Mn(2+) is bound by residues Asp291, Asp350, and Glu352. Arg354 is a catalytic residue.

Belongs to the peptidase M17 family. The cofactor is Mn(2+).

The protein localises to the cytoplasm. It catalyses the reaction Release of an N-terminal amino acid, Xaa-|-Yaa-, in which Xaa is preferably Leu, but may be other amino acids including Pro although not Arg or Lys, and Yaa may be Pro. Amino acid amides and methyl esters are also readily hydrolyzed, but rates on arylamides are exceedingly low.. It carries out the reaction Release of an N-terminal amino acid, preferentially leucine, but not glutamic or aspartic acids.. Its function is as follows. Presumably involved in the processing and regular turnover of intracellular proteins. Catalyzes the removal of unsubstituted N-terminal amino acids from various peptides. The protein is Probable cytosol aminopeptidase of Nitrosococcus oceani (strain ATCC 19707 / BCRC 17464 / JCM 30415 / NCIMB 11848 / C-107).